Here is a 408-residue protein sequence, read N- to C-terminus: DNA primase DnaG (408 aa).

Residues 165-243 enclose the Toprim domain; the sequence is PELIIVEGRA…KIDYVARAPT (79 aa). Mg(2+)-binding residues include Glu171, Asp216, and Asp218.

Belongs to the archaeal DnaG primase family. In terms of assembly, forms a ternary complex with MCM helicase and DNA. Component of the archaeal exosome complex. Mg(2+) is required as a cofactor.

It catalyses the reaction ssDNA + n NTP = ssDNA/pppN(pN)n-1 hybrid + (n-1) diphosphate.. Functionally, RNA polymerase that catalyzes the synthesis of short RNA molecules used as primers for DNA polymerase during DNA replication. Also part of the exosome, which is a complex involved in RNA degradation. Acts as a poly(A)-binding protein that enhances the interaction between heteromeric, adenine-rich transcripts and the exosome. This Sulfurisphaera tokodaii (strain DSM 16993 / JCM 10545 / NBRC 100140 / 7) (Sulfolobus tokodaii) protein is DNA primase DnaG.